The primary structure comprises 307 residues: 4-diphosphocytidyl-2-C-methyl-D-erythritol kinase (307 aa).

Lys16 is a catalytic residue. 101–111 lines the ATP pocket; it reads PVAGGMAGGSA. Asp143 is an active-site residue.

The protein belongs to the GHMP kinase family. IspE subfamily.

The catalysed reaction is 4-CDP-2-C-methyl-D-erythritol + ATP = 4-CDP-2-C-methyl-D-erythritol 2-phosphate + ADP + H(+). Its pathway is isoprenoid biosynthesis; isopentenyl diphosphate biosynthesis via DXP pathway; isopentenyl diphosphate from 1-deoxy-D-xylulose 5-phosphate: step 3/6. Functionally, catalyzes the phosphorylation of the position 2 hydroxy group of 4-diphosphocytidyl-2C-methyl-D-erythritol. The sequence is that of 4-diphosphocytidyl-2-C-methyl-D-erythritol kinase from Nocardia farcinica (strain IFM 10152).